Consider the following 570-residue polypeptide: Putative periplasmic trehalase (570 aa).

The N-terminal stretch at 1 to 34 (MIPPEIRRSVLLQKAIKLALAGTLLTFASFSATA) is a signal peptide. Substrate-binding positions include Arg159, 166–167 (WD), Asn203, 212–214 (RSQ), 284–286 (RPE), and Gly317. Catalysis depends on proton donor/acceptor residues Asp319 and Glu503. Glu518 serves as a coordination point for substrate. A disordered region spans residues 544–570 (KPCDSVPSTRPASLSATPTKTPSAATQ). A compositionally biased stretch (low complexity) spans 554–570 (PASLSATPTKTPSAATQ).

Belongs to the glycosyl hydrolase 37 family. Monomer.

It is found in the periplasm. It catalyses the reaction alpha,alpha-trehalose + H2O = alpha-D-glucose + beta-D-glucose. Provides the cells with the ability to utilize trehalose at high osmolarity by splitting it into glucose molecules that can subsequently be taken up by the phosphotransferase-mediated uptake system. In Salmonella typhi, this protein is Putative periplasmic trehalase.